The primary structure comprises 86 residues: Small ribosomal subunit protein bS20 (86 aa).

The interval Met-1 to Thr-26 is disordered.

It belongs to the bacterial ribosomal protein bS20 family.

Its function is as follows. Binds directly to 16S ribosomal RNA. This chain is Small ribosomal subunit protein bS20, found in Psychromonas ingrahamii (strain DSM 17664 / CCUG 51855 / 37).